A 212-amino-acid chain; its full sequence is Telomere repeats-binding bouquet formation protein 2 (212 aa).

This sequence belongs to the TERB2 family. Component of the MAJIN-TERB1-TERB2 complex.

Its function is as follows. Meiosis-specific telomere-associated protein involved in meiotic telomere attachment to the nucleus inner membrane, a crucial step for homologous pairing and synapsis. Component of the MAJIN-TERB1-TERB2 complex, which promotes telomere cap exchange by mediating attachment of telomeric DNA to the inner nuclear membrane and replacement of the protective cap of telomeric chromosomes: in early meiosis, the MAJIN-TERB1-TERB2 complex associates with telomeric DNA and the shelterin/telosome complex. During prophase, the complex matures and promotes release of the shelterin/telosome complex from telomeric DNA. The polypeptide is Telomere repeats-binding bouquet formation protein 2 (Danio rerio (Zebrafish)).